Consider the following 362-residue polypeptide: Outer membrane porin F (362 aa).

Residues methionine 1–alanine 22 form the signal peptide.

It belongs to the Gram-negative porin family. Homotrimer. Forms mixed heterotrimers with OmpC; other mixed heterotrimers are also probable.

The protein resides in the cell outer membrane. Its function is as follows. Forms pores that allow passive diffusion of small molecules across the outer membrane. Functionally, (Microbial infection) Is the major receptor for colicin E5. (Microbial infection) A mixed OmpC-OmpF heterotrimer is the outer membrane receptor for toxin CdiA-EC536. In Escherichia coli O6:K15:H31 (strain 536 / UPEC), this protein is Outer membrane porin F (ompF).